A 126-amino-acid chain; its full sequence is Glycine cleavage system H protein (126 aa).

The Lipoyl-binding domain maps to 21 to 103 (TVTIGISEHA…YEGGWIVKVK (83 aa)). Residue lysine 62 is modified to N6-lipoyllysine.

This sequence belongs to the GcvH family. The glycine cleavage system is composed of four proteins: P, T, L and H. Requires (R)-lipoate as cofactor.

Functionally, the glycine cleavage system catalyzes the degradation of glycine. The H protein shuttles the methylamine group of glycine from the P protein to the T protein. This is Glycine cleavage system H protein from Vibrio parahaemolyticus serotype O3:K6 (strain RIMD 2210633).